A 333-amino-acid chain; its full sequence is Holliday junction branch migration complex subunit RuvB (333 aa).

The interval 1–182 is large ATPase domain (RuvB-L); it reads MDERLLSGES…FGVLSRLEYY (182 aa). ATP is bound by residues L21, R22, G63, K66, T67, T68, 129 to 131, R172, Y182, and R219; that span reads EDF. T67 contacts Mg(2+). Residues 183 to 253 are small ATPAse domain (RuvB-S); it reads TVDQLSEIVE…ITQMALELLQ (71 aa). A head domain (RuvB-H) region spans residues 256-333; sequence KLGLDHIDHK…EHFGMEMPKV (78 aa). The DNA site is built by R311 and R316.

Belongs to the RuvB family. In terms of assembly, homohexamer. Forms an RuvA(8)-RuvB(12)-Holliday junction (HJ) complex. HJ DNA is sandwiched between 2 RuvA tetramers; dsDNA enters through RuvA and exits via RuvB. An RuvB hexamer assembles on each DNA strand where it exits the tetramer. Each RuvB hexamer is contacted by two RuvA subunits (via domain III) on 2 adjacent RuvB subunits; this complex drives branch migration. In the full resolvosome a probable DNA-RuvA(4)-RuvB(12)-RuvC(2) complex forms which resolves the HJ.

It is found in the cytoplasm. It catalyses the reaction ATP + H2O = ADP + phosphate + H(+). The RuvA-RuvB-RuvC complex processes Holliday junction (HJ) DNA during genetic recombination and DNA repair, while the RuvA-RuvB complex plays an important role in the rescue of blocked DNA replication forks via replication fork reversal (RFR). RuvA specifically binds to HJ cruciform DNA, conferring on it an open structure. The RuvB hexamer acts as an ATP-dependent pump, pulling dsDNA into and through the RuvAB complex. RuvB forms 2 homohexamers on either side of HJ DNA bound by 1 or 2 RuvA tetramers; 4 subunits per hexamer contact DNA at a time. Coordinated motions by a converter formed by DNA-disengaged RuvB subunits stimulates ATP hydrolysis and nucleotide exchange. Immobilization of the converter enables RuvB to convert the ATP-contained energy into a lever motion, pulling 2 nucleotides of DNA out of the RuvA tetramer per ATP hydrolyzed, thus driving DNA branch migration. The RuvB motors rotate together with the DNA substrate, which together with the progressing nucleotide cycle form the mechanistic basis for DNA recombination by continuous HJ branch migration. Branch migration allows RuvC to scan DNA until it finds its consensus sequence, where it cleaves and resolves cruciform DNA. In Bacillus cereus (strain ATCC 10987 / NRS 248), this protein is Holliday junction branch migration complex subunit RuvB.